The primary structure comprises 492 residues: V-type proton ATPase subunit B 1 (492 aa).

The protein belongs to the ATPase alpha/beta chains family. As to quaternary structure, V-ATPase is a heteromultimeric enzyme composed of a peripheral catalytic V1 complex (main components: subunits A, B, C, D, E, and F) attached to an integral membrane V0 proton pore complex (main component: the proteolipid protein).

In terms of biological role, non-catalytic subunit of the peripheral V1 complex of vacuolar ATPase. V-ATPase is responsible for acidifying a variety of intracellular compartments in eukaryotic cells. In Acetabularia acetabulum (Mermaid's wine glass), this protein is V-type proton ATPase subunit B 1.